The primary structure comprises 287 residues: Pyridoxal 5'-phosphate synthase subunit PdxS (287 aa).

D21 provides a ligand contact to D-ribose 5-phosphate. The active-site Schiff-base intermediate with D-ribose 5-phosphate is the K78. G150 is a D-ribose 5-phosphate binding site. Residue R162 coordinates D-glyceraldehyde 3-phosphate. Residues G211 and G232–S233 each bind D-ribose 5-phosphate.

The protein belongs to the PdxS/SNZ family. In terms of assembly, in the presence of PdxT, forms a dodecamer of heterodimers.

It catalyses the reaction aldehydo-D-ribose 5-phosphate + D-glyceraldehyde 3-phosphate + L-glutamine = pyridoxal 5'-phosphate + L-glutamate + phosphate + 3 H2O + H(+). Its pathway is cofactor biosynthesis; pyridoxal 5'-phosphate biosynthesis. Functionally, catalyzes the formation of pyridoxal 5'-phosphate from ribose 5-phosphate (RBP), glyceraldehyde 3-phosphate (G3P) and ammonia. The ammonia is provided by the PdxT subunit. Can also use ribulose 5-phosphate and dihydroxyacetone phosphate as substrates, resulting from enzyme-catalyzed isomerization of RBP and G3P, respectively. The chain is Pyridoxal 5'-phosphate synthase subunit PdxS from Tropheryma whipplei (strain Twist) (Whipple's bacillus).